The sequence spans 81 residues: Cytotoxin 3 (81 aa).

Positions 1 to 21 (MKTLLLTLVVVTIVCLDLGYT) are cleaved as a signal peptide. Intrachain disulfides connect C24-C42, C35-C59, C63-C74, and C75-C80.

The protein belongs to the three-finger toxin family. Short-chain subfamily. Type IA cytotoxin sub-subfamily. In terms of assembly, monomer in solution; Homodimer and oligomer in the presence of negatively charged lipids forming a pore with a size ranging between 20 and 30 Angstroms. Interacts with Kv channel-interacting protein 1 (KCNIP1) in a calcium-independent manner. In terms of tissue distribution, expressed by the venom gland.

It is found in the secreted. It localises to the target cell membrane. In terms of biological role, basic protein that binds to cell membrane and depolarizes cardiomyocytes. This cytotoxin also possesses lytic activity on many other cells, including red blood cells. Interaction with sulfatides in the cell membrane induces pore formation and cell internalization. Cytotoxicity is due to pore formation, and to another mechanism independent of membrane-damaging activity. When internalized, it targets the mitochondrial membrane and induces mitochondrial swelling and fragmentation. It inhibits protein kinases C. It binds to the integrin alpha-V/beta-3 (ITGAV/ITGB3) with a moderate affinity. It also binds with high affinity to heparin. The sequence is that of Cytotoxin 3 from Naja atra (Chinese cobra).